Consider the following 741-residue polypeptide: Protein O-mannosyl-transferase TMTC4 (741 aa).

Residues 1–14 are Cytoplasmic-facing; that stretch reads MAVLDTDLDHILPS. Residues 15–35 form a helical membrane-spanning segment; that stretch reads SVLPPFWAKLVVGSVAIVCFA. Residues 36–111 are Extracellular-facing; sequence RSYDGDFVFD…FHPVGFHVVN (76 aa). Asparagine 78 carries an N-linked (GlcNAc...) asparagine glycan. Residues 112 to 132 traverse the membrane as a helical segment; the sequence is ILLHSGISVLMVDVFSVLFGG. Residues 133-141 lie on the Cytoplasmic side of the membrane; that stretch reads LQYTSKGRR. A helical transmembrane segment spans residues 142–162; that stretch reads LHLAPRASLLAALLFAVHPVH. Residues 163 to 165 are Extracellular-facing; the sequence is TEC. A helical membrane pass occupies residues 166–186; that stretch reads VAGVVGRADLLCALFFLLSFL. Residues 187–198 lie on the Cytoplasmic side of the membrane; sequence GYCKAFRESNKE. A helical transmembrane segment spans residues 199-219; the sequence is GAHSSTFWVLLSIFLGAVAML. Topologically, residues 220 to 224 are extracellular; the sequence is CKEQG. The helical transmembrane segment at 225 to 245 threads the bilayer; sequence ITVLGLNAVFDILVIGKFNVL. The Cytoplasmic segment spans residues 246–268; the sequence is EIVQKVLHKDKSLENLGMLRNGG. Residues 269-288 form a helical membrane-spanning segment; that stretch reads LLFRMTLLTSGGAGMLYVRW. Over 289–354 the chain is Extracellular; the sequence is RIMGTGPPAF…PLIKSISDWR (66 aa). Residues 355-375 form a helical membrane-spanning segment; the sequence is VIALAALWFCLIGLICQALCS. The Cytoplasmic portion of the chain corresponds to 376 to 382; that stretch reads EDGHKRR. A helical membrane pass occupies residues 383–403; the sequence is ILTLGLGFLVIPFLPASNLFF. Residues 404–412 lie on the Extracellular side of the membrane; sequence RVGFVVAER. The helical transmembrane segment at 413–433 threads the bilayer; sequence VLYLPSVGYCVLLTFGFGALS. The Cytoplasmic segment spans residues 434-440; it reads KHTKKKK. The helical transmembrane segment at 441 to 461 threads the bilayer; it reads LIAAVVLGILFINTLRCVLRS. Residues 462 to 741 lie on the Extracellular side of the membrane; it reads GEWRSEEQLF…KLELMQKKAV (280 aa). 7 TPR repeats span residues 482-515, 516-549, 550-583, 584-617, 618-651, 652-685, and 686-719; these read AKVH…NPKY, VHAM…QPDF, AAAW…RRKY, PDCY…KPEH, SLAW…IPND, HSLM…NPNA, and ASYH…DPTA. An N-linked (GlcNAc...) asparagine glycan is attached at asparagine 497. Asparagine 609 carries N-linked (GlcNAc...) asparagine glycosylation.

This sequence belongs to the TMTC family.

The protein localises to the membrane. The protein resides in the endoplasmic reticulum. The enzyme catalyses a di-trans,poly-cis-dolichyl beta-D-mannosyl phosphate + L-seryl-[protein] = 3-O-(alpha-D-mannosyl)-L-seryl-[protein] + a di-trans,poly-cis-dolichyl phosphate + H(+). The catalysed reaction is a di-trans,poly-cis-dolichyl beta-D-mannosyl phosphate + L-threonyl-[protein] = 3-O-(alpha-D-mannosyl)-L-threonyl-[protein] + a di-trans,poly-cis-dolichyl phosphate + H(+). The protein operates within protein modification; protein glycosylation. Transfers mannosyl residues to the hydroxyl group of serine or threonine residues. The 4 members of the TMTC family are O-mannosyl-transferases dedicated primarily to the cadherin superfamily, each member seems to have a distinct role in decorating the cadherin domains with O-linked mannose glycans at specific regions. Also acts as O-mannosyl-transferase on other proteins such as PDIA3. This chain is Protein O-mannosyl-transferase TMTC4, found in Homo sapiens (Human).